The following is a 1374-amino-acid chain: DNA-directed RNA polymerase subunit beta' (1374 aa).

The segment at 1–47 is disordered; that stretch reads MTSTSPKSRKPSTKTTKSKSKSKSKSKAAKAAAASASPALARTPPQF. Basic residues predominate over residues 7–28; that stretch reads KSRKPSTKTTKSKSKSKSKSKA. The segment covering 29–45 has biased composition (low complexity); sequence AKAAAASASPALARTPP. Zn(2+) contacts are provided by Cys258, Cys325, Cys332, and Cys335. Residues 1343–1374 are disordered; sequence VRPTGENELEEEQLPDPSALEGLQQEGLLTEE. The span at 1362–1374 shows a compositional bias: low complexity; sequence LEGLQQEGLLTEE.

Belongs to the RNA polymerase beta' chain family. RpoC2 subfamily. In cyanobacteria the RNAP catalytic core is composed of 2 alpha, 1 beta, 1 beta', 1 gamma and 1 omega subunit. When a sigma factor is associated with the core the holoenzyme is formed, which can initiate transcription. Requires Zn(2+) as cofactor.

It carries out the reaction RNA(n) + a ribonucleoside 5'-triphosphate = RNA(n+1) + diphosphate. In terms of biological role, DNA-dependent RNA polymerase catalyzes the transcription of DNA into RNA using the four ribonucleoside triphosphates as substrates. The sequence is that of DNA-directed RNA polymerase subunit beta' from Prochlorococcus marinus (strain MIT 9303).